The primary structure comprises 506 residues: Nondiscriminating glutamyl-tRNA synthetase EARS2, mitochondrial (506 aa).

The transit peptide at 1 to 41 directs the protein to the mitochondrion; that stretch reads MAALLRRLLQRGRPLAASGRRVGRREARLGTGPGVAVRVRF. Residue 40-42 coordinates L-glutamate; the sequence is RFA. The 'HIGH' region motif lies at 45-53; the sequence is PTGFLHLGG. ATP is bound at residue histidine 50. L-glutamate contacts are provided by residues glutamate 76, 228–232, and arginine 246; that span reads YHLAC. Glutamate 249 lines the ATP pocket. Lysine 256 is subject to N6-succinyllysine. 284-288 contacts ATP; that stretch reads KLSKR. The short motif at 284–288 is the 'KMSKS' region element; that stretch reads KLSKR. Lysine 486 carries the post-translational modification N6-acetyllysine.

This sequence belongs to the class-I aminoacyl-tRNA synthetase family. Glutamate--tRNA ligase type 1 subfamily.

It localises to the mitochondrion matrix. It catalyses the reaction tRNA(Glx) + L-glutamate + ATP = L-glutamyl-tRNA(Glx) + AMP + diphosphate. The enzyme catalyses tRNA(Glu) + L-glutamate + ATP = L-glutamyl-tRNA(Glu) + AMP + diphosphate. It carries out the reaction tRNA(Gln) + L-glutamate + ATP = L-glutamyl-tRNA(Gln) + AMP + diphosphate. In terms of biological role, non-discriminating glutamyl-tRNA synthetase that catalyzes aminoacylation of both mitochondrial tRNA(Glu) and tRNA(Gln) and participates in RNA aminoacylation for mitochondrial protein translation. Attachs glutamate to tRNA(Glu) or tRNA(Gln) in a two-step reaction: glutamate is first activated by ATP to form Glu-AMP and then transferred to the acceptor end of tRNA(Glu) or tRNA(Gln). In vitro, cytoplasmic tRNA(Gln) is slightly glutamylated, but with low activity. In Macaca fascicularis (Crab-eating macaque), this protein is Nondiscriminating glutamyl-tRNA synthetase EARS2, mitochondrial.